Here is a 110-residue protein sequence, read N- to C-terminus: NADH-quinone oxidoreductase subunit K (110 aa).

Transmembrane regions (helical) follow at residues 13–33 (LNHY…GLFM), 41–61 (ILMS…AFSI), and 73–93 (IIIL…LLIY).

The protein belongs to the complex I subunit 4L family. In terms of assembly, NDH-1 is composed of 14 different subunits. Subunits NuoA, H, J, K, L, M, N constitute the membrane sector of the complex.

The protein resides in the cell inner membrane. It carries out the reaction a quinone + NADH + 5 H(+)(in) = a quinol + NAD(+) + 4 H(+)(out). In terms of biological role, NDH-1 shuttles electrons from NADH, via FMN and iron-sulfur (Fe-S) centers, to quinones in the respiratory chain. The immediate electron acceptor for the enzyme in this species is believed to be ubiquinone. Couples the redox reaction to proton translocation (for every two electrons transferred, four hydrogen ions are translocated across the cytoplasmic membrane), and thus conserves the redox energy in a proton gradient. In Rickettsia felis (strain ATCC VR-1525 / URRWXCal2) (Rickettsia azadi), this protein is NADH-quinone oxidoreductase subunit K.